The sequence spans 449 residues: Xylose isomerase (449 aa).

Residues His-101 and Asp-104 contribute to the active site. 7 residues coordinate Mg(2+): Glu-232, Glu-268, His-271, Asp-296, Asp-307, Asp-309, and Asp-340.

It belongs to the xylose isomerase family. In terms of assembly, homotetramer. The cofactor is Mg(2+).

It localises to the cytoplasm. It catalyses the reaction alpha-D-xylose = alpha-D-xylulofuranose. The protein is Xylose isomerase of Bifidobacterium longum (strain NCC 2705).